Here is a 918-residue protein sequence, read N- to C-terminus: Aconitase-ribosomal protein bL21m fusion protein (918 aa).

Residues 1–30 constitute a mitochondrion transit peptide; that stretch reads MATFARMKLCLSGSSQAIPSKGISLVAARF. The segment at 31–811 is homocitrate dehydratase, mitochondrial; that stretch reads QSTASRASYV…IDSIKQQPDH (781 aa). Substrate is bound by residues Gln-105 and 198 to 200; that span reads DSH. Cys-394, Cys-457, and Cys-460 together coordinate [4Fe-4S] cluster. Substrate contacts are provided by residues Arg-484, Arg-489, Lys-619, and 680–681; that span reads AR. The interval 812–918 is large ribosomal subunit protein bL21m; it reads YADAYIFNRH…ILRVTELKLN (107 aa).

The protein in the N-terminal section; belongs to the aconitase/IPM isomerase family. In the C-terminal section; belongs to the bacterial ribosomal protein bL21 family. In terms of assembly, component of the mitochondrial large ribosomal subunit (mt-LSU). Mature yeast 74S mitochondrial ribosomes consist of a small (37S) and a large (54S) subunit. The 37S small subunit contains a 15S ribosomal RNA (15S mt-rRNA) and at least 32 different proteins. The 54S large subunit contains a 21S rRNA (21S mt-rRNA) and at least 45 different proteins. [4Fe-4S] cluster is required as a cofactor.

Its subcellular location is the mitochondrion. It is found in the nucleus. The catalysed reaction is (2R)-homocitrate = cis-homoaconitate + H2O. It functions in the pathway amino-acid biosynthesis; L-lysine biosynthesis via AAA pathway; L-alpha-aminoadipate from 2-oxoglutarate: step 2/5. Its function is as follows. Catalyzes the reversible dehydration of (R)-homocitrate to cis-homoaconitate, a step in the alpha-aminoadipate pathway for lysine biosynthesis. Functionally, component of the mitochondrial ribosome (mitoribosome), a dedicated translation machinery responsible for the synthesis of mitochondrial genome-encoded proteins, including at least some of the essential transmembrane subunits of the mitochondrial respiratory chain. The mitoribosomes are attached to the mitochondrial inner membrane and translation products are cotranslationally integrated into the membrane. The chain is Aconitase-ribosomal protein bL21m fusion protein (aco2) from Schizosaccharomyces pombe (strain 972 / ATCC 24843) (Fission yeast).